Reading from the N-terminus, the 224-residue chain is Rhodanese-like domain-containing protein 14, chloroplastic (224 aa).

Residues 1–48 constitute a chloroplast transit peptide; it reads MASLTSIATPYPSSSQALRLKSSGNTLFSAGVRSAAMVSGHKTLKIQC. Positions 87 to 220 constitute a Rhodanese domain; the sequence is KENNFVILDV…WGKEGLPVET (134 aa). Residue C166 is the Cysteine persulfide intermediate of the active site.

Its subcellular location is the plastid. The protein resides in the chloroplast. This chain is Rhodanese-like domain-containing protein 14, chloroplastic, found in Arabidopsis thaliana (Mouse-ear cress).